A 392-amino-acid polypeptide reads, in one-letter code: Flavohemoprotein (392 aa).

One can recognise a Globin domain in the interval 1–139 (MLNAEQRAII…LADILIGAEE (139 aa)). A heme b-binding site is contributed by H85. Active-site charge relay system residues include Y95 and E138. The interval 150–392 (GGWRGTREFR…EFFGPAAALE (243 aa)) is reductase. The region spanning 153–256 (RGTREFRLVR…FPPAGDFTLA (104 aa)) is the FAD-binding FR-type domain. Residues Y191 and 205-208 (RNYS) each bind FAD. 268–273 (GVGITP) lines the NADP(+) pocket. 384-387 (FFGP) is an FAD binding site.

Belongs to the globin family. Two-domain flavohemoproteins subfamily. It in the C-terminal section; belongs to the flavoprotein pyridine nucleotide cytochrome reductase family. It depends on heme b as a cofactor. FAD serves as cofactor.

The catalysed reaction is 2 nitric oxide + NADPH + 2 O2 = 2 nitrate + NADP(+) + H(+). The enzyme catalyses 2 nitric oxide + NADH + 2 O2 = 2 nitrate + NAD(+) + H(+). Its function is as follows. Is involved in NO detoxification in an aerobic process, termed nitric oxide dioxygenase (NOD) reaction that utilizes O(2) and NAD(P)H to convert NO to nitrate, which protects the bacterium from various noxious nitrogen compounds. Therefore, plays a central role in the inducible response to nitrosative stress. The sequence is that of Flavohemoprotein from Pseudomonas putida (strain ATCC 47054 / DSM 6125 / CFBP 8728 / NCIMB 11950 / KT2440).